A 141-amino-acid polypeptide reads, in one-letter code: Galactose-6-phosphate isomerase subunit LacA 1 (141 aa).

The protein belongs to the LacAB/RpiB family. In terms of assembly, heteromultimeric protein consisting of LacA and LacB.

It carries out the reaction aldehydo-D-galactose 6-phosphate = keto-D-tagatose 6-phosphate. It participates in carbohydrate metabolism; D-galactose 6-phosphate degradation; D-tagatose 6-phosphate from D-galactose 6-phosphate: step 1/1. This chain is Galactose-6-phosphate isomerase subunit LacA 1, found in Streptococcus agalactiae serotype III (strain NEM316).